A 345-amino-acid polypeptide reads, in one-letter code: Protein RecA (345 aa).

67 to 74 contributes to the ATP binding site; the sequence is GPESSGKT.

The protein belongs to the RecA family.

The protein localises to the cytoplasm. Its function is as follows. Can catalyze the hydrolysis of ATP in the presence of single-stranded DNA, the ATP-dependent uptake of single-stranded DNA by duplex DNA, and the ATP-dependent hybridization of homologous single-stranded DNAs. It interacts with LexA causing its activation and leading to its autocatalytic cleavage. The protein is Protein RecA of Acidothermus cellulolyticus (strain ATCC 43068 / DSM 8971 / 11B).